Consider the following 304-residue polypeptide: Recombination-associated protein RdgC (304 aa).

Belongs to the RdgC family.

Its subcellular location is the cytoplasm. The protein resides in the nucleoid. Its function is as follows. May be involved in recombination. The polypeptide is Recombination-associated protein RdgC (Dechloromonas aromatica (strain RCB)).